Consider the following 28-residue polypeptide: Vasoactive intestinal peptide (28 aa).

Asn-28 carries the asparagine amide modification.

Belongs to the glucagon family.

It localises to the secreted. In terms of biological role, VIP is a neuropeptide involved in a diverse array of physiological processes through activating the PACAP subfamily of class B1 G protein-coupled receptors: VIP receptor 1 (VPR1) and VIP receptor 2 (VPR2). Abundantly expressed throughout the CNS and peripheral nervous systems where they primarily exert neuroprotective and immune modulatory roles. Also causes vasodilation, lowers arterial blood pressure, stimulates myocardial contractility, increases glycogenolysis and relaxes the smooth muscle of trachea, stomach and gall bladder. In Canis lupus familiaris (Dog), this protein is Vasoactive intestinal peptide (VIP).